Consider the following 659-residue polypeptide: UvrABC system protein B (659 aa).

The 390-residue stretch at 25–414 (EGVRRGAREQ…PSLVVEQIVR (390 aa)) folds into the Helicase ATP-binding domain. Position 38–45 (38–45 (GATGTGKT)) interacts with ATP. Positions 91 to 114 (YYDYYQPEAYIPTTDTYIEKDALI) match the Beta-hairpin motif. In terms of domain architecture, Helicase C-terminal spans 431–597 (QIDDLYAEIR…TIVKPVRDVI (167 aa)). The 36-residue stretch at 620–655 (PKVVAKLRKEMMQAAKDLDFERAAEIRDIIFELEKK) folds into the UVR domain.

This sequence belongs to the UvrB family. In terms of assembly, forms a heterotetramer with UvrA during the search for lesions. Interacts with UvrC in an incision complex.

Its subcellular location is the cytoplasm. In terms of biological role, the UvrABC repair system catalyzes the recognition and processing of DNA lesions. A damage recognition complex composed of 2 UvrA and 2 UvrB subunits scans DNA for abnormalities. Upon binding of the UvrA(2)B(2) complex to a putative damaged site, the DNA wraps around one UvrB monomer. DNA wrap is dependent on ATP binding by UvrB and probably causes local melting of the DNA helix, facilitating insertion of UvrB beta-hairpin between the DNA strands. Then UvrB probes one DNA strand for the presence of a lesion. If a lesion is found the UvrA subunits dissociate and the UvrB-DNA preincision complex is formed. This complex is subsequently bound by UvrC and the second UvrB is released. If no lesion is found, the DNA wraps around the other UvrB subunit that will check the other stand for damage. The protein is UvrABC system protein B of Symbiobacterium thermophilum (strain DSM 24528 / JCM 14929 / IAM 14863 / T).